Consider the following 360-residue polypeptide: Peptide chain release factor 1 (360 aa).

Gln235 bears the N5-methylglutamine mark. The segment covering 280 to 293 (DKQSHEQQAKEAAT) has biased composition (basic and acidic residues). The disordered stretch occupies residues 280 to 300 (DKQSHEQQAKEAATRKSLIGS).

Belongs to the prokaryotic/mitochondrial release factor family. Methylated by PrmC. Methylation increases the termination efficiency of RF1.

The protein localises to the cytoplasm. Its function is as follows. Peptide chain release factor 1 directs the termination of translation in response to the peptide chain termination codons UAG and UAA. The polypeptide is Peptide chain release factor 1 (Paraburkholderia phytofirmans (strain DSM 17436 / LMG 22146 / PsJN) (Burkholderia phytofirmans)).